Consider the following 438-residue polypeptide: Battenin (438 aa).

The interval 1 to 25 (MGGCAGSRRRLSDSEGEETVPEPRL) is disordered. Topologically, residues 1-37 (MGGCAGSRRRLSDSEGEETVPEPRLPLLDHQGAHWKN) are cytoplasmic. S12 and S14 each carry phosphoserine. The helical transmembrane segment at 38–58 (AVGFWLLGLCNNFSYVVMLSA) threads the bilayer. Residues 59–127 (AHDILSHERT…GLHLLPYSPR (69 aa)) are Lumenal-facing. Residues N71 and N85 are each glycosylated (N-linked (GlcNAc...) asparagine). The chain crosses the membrane as a helical span at residues 128–148 (VLVSGICAAGSFVLVAFSHSV). Over 149-151 (GTS) the chain is Cytoplasmic. Residues 152–172 (LCGVVLASISSGLGEVTFLSL) form a helical membrane-spanning segment. Over 173-182 (TAFYPRAVIS) the chain is Lumenal. The helical transmembrane segment at 183–203 (WWSSGTGGAGLLGALSYLGLT) threads the bilayer. The Cytoplasmic segment spans residues 204-277 (QAGLSPQQTL…SLSLRERWTV (74 aa)). Residues 237–268 (QDPGGEEEAESSARQPLIRTEAPESKPGSSSS) are disordered. The short motif at 242–244 (EEE) is the Lysosomal targeting motif element. The Lysosomal targeting motif. Required for AP1G1, AP2A2 and AP3D1 interaction signature appears at 253-254 (LI). A helical membrane pass occupies residues 278–298 (FKGLLWYIVPLVVVYFAEYFI). Topologically, residues 299–346 (NQGLFELLFFRNTSLSHAQQYRWYQMLYQAGVFASRSSLRCCHIRFTW) are lumenal. N310 carries N-linked (GlcNAc...) asparagine glycosylation. A helical transmembrane segment spans residues 347–367 (ALALLQCLNLAFLLADVWFGF). Residues 368–438 (LLSIYFVFLI…PLHDFLCQLS (71 aa)) lie on the Cytoplasmic side of the membrane. The Lysosomal targeting motif signature appears at 409 to 419 (MATTCISDTLG). C435 bears the Cysteine methyl ester mark. C435 carries S-farnesyl cysteine lipidation. Residues 436 to 438 (QLS) constitute a propeptide, removed in mature form.

It belongs to the battenin family. In terms of assembly, interacts with DCTN1, KIF3A, RAB7A and RILP. Interacts with CLN5. In terms of processing, highly glycosylated. Farnesylation is important for trafficking to lysosomes.

The protein localises to the lysosome membrane. It is found in the late endosome. It localises to the lysosome. Functionally, mediates microtubule-dependent, anterograde transport connecting the Golgi network, endosomes, autophagosomes, lysosomes and plasma membrane, and participates in several cellular processes such as regulation of lysosomal pH, lysosome protein degradation, receptor-mediated endocytosis, autophagy, transport of proteins and lipids from the TGN, apoptosis and synaptic transmission. Facilitates the proteins transport from trans-Golgi network (TGN)-to other membrane compartments such as transport of microdomain-associated proteins to the plasma membrane, IGF2R transport to the lysosome where it regulates the CTSD release leading to regulation of CTSD maturation and thereby APP intracellular processing. Moreover regulates CTSD activity in response to osmotic stress. Also binds galactosylceramide and transports it from the trans Golgi to the rafts, which may have immediate and downstream effects on cell survival by modulating ceramide synthesis. At the plasma membrane, regulates actin-dependent events including filopodia formation, cell migration, and pinocytosis through ARF1-CDC42 pathway and also the cytoskeleton organization through interaction with MYH10 and fodrin leading to the regulation of the plasma membrane association of Na+, K+ ATPase complex. Regulates synaptic transmission in the amygdala, hippocampus, and cerebellum through regulation of synaptic vesicles density and their proximity to active zones leading to modulation of short-term plasticity and age-dependent anxious behavior, learning and memory. Regulates autophagic vacuoles (AVs) maturation by modulating the trafficking between endocytic and autophagolysosomal/lysosomal compartments, which involves vesicle fusion leading to regulation of degradation process. Also participates in cellular homeostasis of compounds such as, water, ions, amino acids, proteins and lipids in several tissue namely in brain and kidney through regulation of their transport and synthesis. The polypeptide is Battenin (Macaca fascicularis (Crab-eating macaque)).